The primary structure comprises 182 residues: ATP-dependent protease subunit HslV (182 aa).

Thr-7 is an active-site residue. The Na(+) site is built by Gly-162, Cys-165, and Thr-168.

The protein belongs to the peptidase T1B family. HslV subfamily. In terms of assembly, a double ring-shaped homohexamer of HslV is capped on each side by a ring-shaped HslU homohexamer. The assembly of the HslU/HslV complex is dependent on binding of ATP.

Its subcellular location is the cytoplasm. It catalyses the reaction ATP-dependent cleavage of peptide bonds with broad specificity.. Its activity is regulated as follows. Allosterically activated by HslU binding. Its function is as follows. Protease subunit of a proteasome-like degradation complex believed to be a general protein degrading machinery. The protein is ATP-dependent protease subunit HslV of Legionella pneumophila subsp. pneumophila (strain Philadelphia 1 / ATCC 33152 / DSM 7513).